The sequence spans 66 residues: U10-theraphotoxin-Cg1a 1 (66 aa).

The signal sequence occupies residues 1 to 21 (MKTSVLFVIFGLALLFCLSFA). Residues 22–29 (AELEDTGR) constitute a propeptide that is removed on maturation. 3 cysteine pairs are disulfide-bonded: Cys31/Cys46, Cys38/Cys51, and Cys45/Cys58.

The protein belongs to the neurotoxin 10 (Hwtx-1) family. 29 (Jztx-13) subfamily. As to expression, expressed by the venom gland.

The protein resides in the secreted. Probable ion channel inhibitor. The sequence is that of U10-theraphotoxin-Cg1a 1 from Chilobrachys guangxiensis (Chinese earth tiger tarantula).